We begin with the raw amino-acid sequence, 329 residues long: tRNA pseudouridine synthase B (329 aa).

Residue His-43 participates in substrate binding. The active-site Nucleophile is the Asp-48. Residues Tyr-76, Tyr-179, and Leu-200 each contribute to the substrate site.

This sequence belongs to the pseudouridine synthase TruB family. Type 1 subfamily.

It catalyses the reaction uridine(55) in tRNA = pseudouridine(55) in tRNA. In terms of biological role, responsible for synthesis of pseudouridine from uracil-55 in the psi GC loop of transfer RNAs. The protein is tRNA pseudouridine synthase B of Yersinia enterocolitica serotype O:8 / biotype 1B (strain NCTC 13174 / 8081).